We begin with the raw amino-acid sequence, 229 residues long: Peptide methionine sulfoxide reductase B3, chloroplastic (229 aa).

The transit peptide at 1–71 (MGVQHLLKLR…NHNQWAASRC (71 aa)) directs the protein to the chloroplast. The MsrB domain maps to 102-223 (EEEWEAILSP…NSISLKFIPA (122 aa)). 4 residues coordinate Zn(2+): Cys141, Cys144, Cys187, and Cys190. Cys159 and Cys212 are oxidised to a cystine. Residue Cys212 is the Nucleophile of the active site.

The protein belongs to the MsrB Met sulfoxide reductase family. It depends on Zn(2+) as a cofactor.

Its subcellular location is the plastid. It is found in the chloroplast. It catalyses the reaction L-methionyl-[protein] + [thioredoxin]-disulfide + H2O = L-methionyl-(R)-S-oxide-[protein] + [thioredoxin]-dithiol. Functionally, catalyzes the reduction of methionine sulfoxide (MetSO) to methionine in proteins. Plays a protective role against oxidative stress by restoring activity to proteins that have been inactivated by methionine oxidation. MSRB family specifically reduces the MetSO R-enantiomer. In Oryza sativa subsp. japonica (Rice), this protein is Peptide methionine sulfoxide reductase B3, chloroplastic (MSRB3).